Reading from the N-terminus, the 225-residue chain is Uracil-DNA glycosylase (225 aa).

D65 functions as the Proton acceptor in the catalytic mechanism.

This sequence belongs to the uracil-DNA glycosylase (UDG) superfamily. UNG family.

The protein localises to the cytoplasm. The enzyme catalyses Hydrolyzes single-stranded DNA or mismatched double-stranded DNA and polynucleotides, releasing free uracil.. Excises uracil residues from the DNA which can arise as a result of misincorporation of dUMP residues by DNA polymerase or due to deamination of cytosine. This is Uracil-DNA glycosylase from Bacillus licheniformis (strain ATCC 14580 / DSM 13 / JCM 2505 / CCUG 7422 / NBRC 12200 / NCIMB 9375 / NCTC 10341 / NRRL NRS-1264 / Gibson 46).